A 657-amino-acid polypeptide reads, in one-letter code: SAGA complex subunit SGF73 (657 aa).

The Zn(2+) site is built by cysteine 78, cysteine 81, histidine 93, and cysteine 98. Disordered stretches follow at residues 98–225 (CAGA…TEKH), 287–353 (EKRA…VNLT), 469–532 (QQQQ…SQDT), and 572–636 (ESNQ…NVSG). Residues 107–118 (TDPRDESTRETI) are compositionally biased toward basic and acidic residues. Over residues 131–163 (DDDNSNDNNNDDDDDDDNDDNEDDDDADDDDDN) the composition is skewed to acidic residues. 2 stretches are compositionally biased toward polar residues: residues 174–193 (SSFN…TPNM) and 200–210 (TGTPQTFSSSI). The region spanning 220-286 (NPTEKHLIDF…EHQTKIGAAA (67 aa)) is the SCA7 domain. Residues 306–321 (QKKHTQQQKQGQRSKQ) are compositionally biased toward basic residues. Low complexity-rich tracts occupy residues 325–336 (NGGKSAKNGGKS) and 469–493 (QQQQ…QPTQ). Residues 504–516 (ATNSSFNANVSSK) are compositionally biased toward polar residues. The segment covering 517–526 (QIQQQQQQQQ) has biased composition (low complexity). Polar residues predominate over residues 572–583 (ESNQDSHLSGTH). Over residues 584-594 (NNNSSKNGNNN) the composition is skewed to low complexity. Positions 600 to 636 (ASISSPNTSVNSIQSPPSVNSVNGSGQGVSTGINVSG) are enriched in polar residues.

The protein belongs to the ataxin-7 family. Component of the 1.8 MDa SAGA (Spt-Ada-Gcn5 acetyltransferase) complex, which is composed of 19 subunits TRA1, SPT7, TAF5, NGG1/ADA3, SGF73, SPT20/ADA5, SPT8, TAF12, TAF6, HFI1/ADA1, UBP8, GCN5, ADA2, SPT3, SGF29, TAF10, TAF9, SGF11 and SUS1. The SAGA complex is composed of 4 modules, namely the HAT (histone acetyltransferase) module (GCN5, ADA2, NGG1/ADA3 and SGF29), the DUB (deubiquitinating) module (UBP8, SGF11, SGF73 and SUS1), the core or TAF (TBP-associated factor) module (TAF5, TAF6, TAF9, TAF10 and TAF12), and the Tra1 or SPT (Suppressor of Ty) module (TRA1, HFI1/ADA1, SPT3, SPT7, SPT8 and SPT20/ADA5). The Tra1/SPT module binds activators, the core module recruits TBP (TATA-binding protein), the HAT module contains the histone H3 acetyltransferase GCN5, and the DUB module comprises the histone H2B deubiquitinase UBP8. Also identified in an altered form of SAGA, named SALSA (SAGA altered, Spt8 absent) or SLIK (SAGA-like) complex, which contains a C-terminal truncated form of SPT7 and is missing SPT8. However, it has been shown that the SAGA and SAGA-like SALSA/SLIK transcriptional coactivators are structurally and biochemically equivalent.

The protein resides in the nucleus. Its subcellular location is the cytoplasm. In terms of biological role, component of the transcription coactivator SAGA complex. SAGA acts as a general cofactor required for essentially all RNA polymerase II transcription. At the promoters, SAGA is required for transcription pre-initiation complex (PIC) recruitment. It influences RNA polymerase II transcriptional activity through different activities such as TBP interaction (via core/TAF module) and promoter selectivity, interaction with transcription activators (via Tra1/SPT module), and chromatin modification through histone acetylation (via HAT module) and deubiquitination (via DUB module). SAGA preferentially acetylates histones H3 (to form H3K9ac, H3K14ac, H3K18ac and H3K23ac) and H2B and deubiquitinates histone H2B. SAGA interacts with DNA via upstream activating sequences (UASs). Also identified in a modified version of SAGA named SALSA or SLIK. The cleavage of SPT7 and the absence of the SPT8 subunit in SLIK neither drive any major conformational differences in its structure compared with SAGA, nor significantly affect HAT, DUB, or DNA-binding activities. SGF73 tethers the DUB module to the rest of the SAGA complex through its central domain and activates the ubiquitin hydrolase UBP8 by maintaining its catalytic domain in an active conformation. SGF73 mediates recruitment of the TREX-2 mRNA export factors SAC3 and THP1 to SAGA, which is crucial to target TREX-2 to the nuclear pore complex (NPC) necessary for export of mRNA. Upon environmental stress, involved in the bypass of the canonical mRNA export process for the immediate export of stress-related transcripts to maintain proteostasis. The protein is SAGA complex subunit SGF73 (SGF73) of Saccharomyces cerevisiae (strain ATCC 204508 / S288c) (Baker's yeast).